Here is a 299-residue protein sequence, read N- to C-terminus: Coenzyme PQQ synthesis protein B (299 aa).

This sequence belongs to the PqqB family.

It functions in the pathway cofactor biosynthesis; pyrroloquinoline quinone biosynthesis. Its function is as follows. May be involved in the transport of PQQ or its precursor to the periplasm. The protein is Coenzyme PQQ synthesis protein B of Methylorubrum extorquens (strain ATCC 14718 / DSM 1338 / JCM 2805 / NCIMB 9133 / AM1) (Methylobacterium extorquens).